The following is a 2155-amino-acid chain: Conidial pigment polyketide synthase PfmaE (2155 aa).

An N-terminal acylcarrier protein transacylase domain (SAT) region spans residues 8 to 245; the sequence is LLFGDQSLDT…TAIPVYGPYH (238 aa). Residues 381–813 enclose the Ketosynthase family 3 (KS3) domain; sequence KCKLAIVGMA…GGNTGLLLED (433 aa). Active-site for beta-ketoacyl synthase activity residues include C553, H688, and H731. Positions 910–1231 are malonyl-CoA:ACP transacylase (MAT) domain; the sequence is AFMFTGQGSH…LCTLHSAGLN (322 aa). The active-site For acyl/malonyl transferase activity is the S1001. Residues 1293–1608 form a product template (PT) domain region; that stretch reads TTTVQKVVRE…PRKVLNVVLP (316 aa). An N-terminal hotdog fold region spans residues 1297 to 1428; the sequence is QKVVREEVKG…CKVFFGDNEE (132 aa). The region spanning 1297 to 1604 is the PKS/mFAS DH domain; it reads QKVVREEVKG…FQAIPRKVLN (308 aa). H1329 serves as the catalytic Proton acceptor; for dehydratase activity. Positions 1455-1604 are C-terminal hotdog fold; sequence DASKIGRGLA…FQAIPRKVLN (150 aa). Catalysis depends on D1516, which acts as the Proton donor; for dehydratase activity. Carrier domains lie at 1653-1730 and 1779-1856; these read LTKN…AQFE and GNVS…GIED. Residue S1690 is modified to O-(pantetheine 4'-phosphoryl)serine. The interval 1738-1782 is disordered; the sequence is EENAHSSASSDSADMETESNFTTPSDDSEKDEVKGDAPAADGNVS. O-(pantetheine 4'-phosphoryl)serine is present on S1816. The tract at residues 1855 to 1892 is disordered; it reads EDKPKRAAPKSAKQEPAKPEPKVQGEAKAHTNPVDNYP. Positions 1866 to 1883 are enriched in basic and acidic residues; sequence AKQEPAKPEPKVQGEAKA. A thioesterase (TE) domain region spans residues 1911–2041; it reads QLFMIPDGSG…LGEGDDAEAK (131 aa).

The protein operates within pigment biosynthesis; melanin biosynthesis. Its function is as follows. Non-reducing polyketide synthase; part of the gene cluster that mediates the biosynthesis of dihydroxynaphthalene (DHN)-melanin, a bluish-green pigment forming a dark layer in the conidial wall that protects the conidia from UV radiations. The first step of the pathway is the production of the pentaketide 1,3,6,8-tetrahydroxynaphthalene (1,3,6,8-THN or T4HN) by the polyketide synthase PfmaE though condensation of acetyl-CoA with malonyl-CoA. T4HN is not stable and easily oxidizes into the stable form flaviolin. T4HN is also substrate of the hydroxynaphthalene reductase PfmaG to yield scytalone. The scytalone dehydratase PfmaJ then reduces scytalone to 1,3,8-THN. 1,3,8-THN is then substrate of the hydroxynaphthalene reductase PfmaI to yield vermelone. Vermelone is further converted by the multicopper oxidase PfmaD to 1,8-DHN. Finally the laccase PFICI_06862 transforms 1,8-DHN to DHN-melanin. The roles of the 5-oxoprolinase PfmaA and the proline iminopeptidase PfmaB within the cluster have not been elucidated yet. The sequence is that of Conidial pigment polyketide synthase PfmaE from Pestalotiopsis fici (strain W106-1 / CGMCC3.15140).